The primary structure comprises 438 residues: Forkhead box protein J1 (438 aa).

The fork-head DNA-binding region spans 123 to 217 (KPPYSYATLI…MNGAMKKRRL (95 aa)).

This sequence belongs to the FOXJ1 family.

It is found in the nucleus. In terms of biological role, key transcription factor required for motile ciliogenesis. Activates genes essential for motile cilia formation and function. This chain is Forkhead box protein J1, found in Xenopus tropicalis (Western clawed frog).